Consider the following 315-residue polypeptide: Homoserine O-succinyltransferase (315 aa).

The active-site Acyl-thioester intermediate is the Cys-142. Substrate is bound by residues Lys-163 and Ser-192. His-235 functions as the Proton acceptor in the catalytic mechanism. Glu-237 is a catalytic residue. Residue Arg-249 participates in substrate binding.

This sequence belongs to the MetA family.

It localises to the cytoplasm. The enzyme catalyses L-homoserine + succinyl-CoA = O-succinyl-L-homoserine + CoA. It participates in amino-acid biosynthesis; L-methionine biosynthesis via de novo pathway; O-succinyl-L-homoserine from L-homoserine: step 1/1. In terms of biological role, transfers a succinyl group from succinyl-CoA to L-homoserine, forming succinyl-L-homoserine. This chain is Homoserine O-succinyltransferase, found in Shewanella piezotolerans (strain WP3 / JCM 13877).